The primary structure comprises 110 residues: Heat shock protein Hsp-12.2 (110 aa).

The sHSP domain occupies 15–110 (DWPLQHNDGV…VLTITASKKA (96 aa)).

This sequence belongs to the small heat shock protein (HSP20) family.

This chain is Heat shock protein Hsp-12.2 (hsp-12.2), found in Caenorhabditis elegans.